We begin with the raw amino-acid sequence, 198 residues long: Superoxide dismutase [Mn], mitochondrial (198 aa).

Residue His26 coordinates Mn(2+). Tyr34 bears the 3'-nitrotyrosine mark. Residues Lys44 and Lys51 each carry the N6-acetyllysine; alternate modification. N6-succinyllysine; alternate occurs at positions 44 and 51. Mn(2+) is bound at residue His74. An N6-acetyllysine modification is found at Lys90. Residues Lys98 and Lys106 each carry the N6-acetyllysine; alternate modification. N6-succinyllysine; alternate occurs at positions 98 and 106. Residues Asp159 and His163 each contribute to the Mn(2+) site. Lys178 is modified (N6-acetyllysine).

The protein belongs to the iron/manganese superoxide dismutase family. Homotetramer. Mn(2+) serves as cofactor. Post-translationally, nitrated under oxidative stress. Nitration coupled with oxidation inhibits the catalytic activity. Acetylation at Lys-98 decreases enzymatic activity. Deacetylated by SIRT3 upon exposure to ionizing radiations or after long fasting. In terms of processing, polyubiquitinated; leading to proteasomal degradation. Deubiquitinated by USP36 which increases protein stability.

Its subcellular location is the mitochondrion matrix. It carries out the reaction 2 superoxide + 2 H(+) = H2O2 + O2. Its function is as follows. Destroys superoxide anion radicals which are normally produced within the cells and which are toxic to biological systems. The polypeptide is Superoxide dismutase [Mn], mitochondrial (SOD2) (Macaca fuscata fuscata (Japanese macaque)).